A 348-amino-acid chain; its full sequence is LIM domain-containing protein unc-97 (348 aa).

LIM zinc-binding domains are found at residues 21–73, 82–132, 146–196, 205–255, and 264–315; these read CVRC…CEHD, CGKC…CREC, CHKC…CLRC, CGAC…CEQH, and CFKC…CKRC.

In terms of assembly, interacts with unc-98. Component of an integrin containing attachment complex, composed of at least pat-2, pat-3, pat-4, pat-6, unc-52, unc-97 and unc-112. Restricted to tissue types that attach to the hypodermis, specifically body wall muscles, vulval muscles, and mechanosensory neurons.

The protein localises to the cell junction. It localises to the adherens junction. Its subcellular location is the nucleus. Functionally, component of an integrin containing attachment complex, which is required for muscle development and maintenance. Probably function in adherens junction. Affects the structural integrity of the integrin containing muscle adherens junctions and contributes to the mechanosensory functions of touch neurons. The chain is LIM domain-containing protein unc-97 from Caenorhabditis elegans.